Reading from the N-terminus, the 243-residue chain is Leucyl/phenylalanyl-tRNA--protein transferase (243 aa).

The protein belongs to the L/F-transferase family.

The protein resides in the cytoplasm. It catalyses the reaction N-terminal L-lysyl-[protein] + L-leucyl-tRNA(Leu) = N-terminal L-leucyl-L-lysyl-[protein] + tRNA(Leu) + H(+). It carries out the reaction N-terminal L-arginyl-[protein] + L-leucyl-tRNA(Leu) = N-terminal L-leucyl-L-arginyl-[protein] + tRNA(Leu) + H(+). The enzyme catalyses L-phenylalanyl-tRNA(Phe) + an N-terminal L-alpha-aminoacyl-[protein] = an N-terminal L-phenylalanyl-L-alpha-aminoacyl-[protein] + tRNA(Phe). Its function is as follows. Functions in the N-end rule pathway of protein degradation where it conjugates Leu, Phe and, less efficiently, Met from aminoacyl-tRNAs to the N-termini of proteins containing an N-terminal arginine or lysine. The chain is Leucyl/phenylalanyl-tRNA--protein transferase from Vibrio cholerae serotype O1 (strain ATCC 39541 / Classical Ogawa 395 / O395).